The sequence spans 508 residues: Phenylalanine--tRNA ligase alpha subunit (508 aa).

Ala-2 is subject to N-acetylalanine. Thr-190 is modified (phosphothreonine). Ser-193 and Ser-301 each carry phosphoserine. N6-acetyllysine is present on Lys-311. Residues Thr-329, 372–374 (QIE), and Tyr-412 contribute to the L-phenylalanine site. Glu-414 lines the Mg(2+) pocket. Residue Phe-438 coordinates L-phenylalanine.

This sequence belongs to the class-II aminoacyl-tRNA synthetase family. Phe-tRNA synthetase alpha subunit type 2 subfamily. In terms of assembly, heterotetramer; dimer of two heterodimers formed by FARSA and FARSB.

It is found in the cytoplasm. The catalysed reaction is tRNA(Phe) + L-phenylalanine + ATP = L-phenylalanyl-tRNA(Phe) + AMP + diphosphate + H(+). This chain is Phenylalanine--tRNA ligase alpha subunit (FARSA), found in Homo sapiens (Human).